The primary structure comprises 92 residues: PqqA binding protein (92 aa).

Belongs to the PqqD family. In terms of assembly, monomer. Interacts with PqqE.

It participates in cofactor biosynthesis; pyrroloquinoline quinone biosynthesis. Functions as a PqqA binding protein and presents PqqA to PqqE, in the pyrroloquinoline quinone (PQQ) biosynthetic pathway. The chain is PqqA binding protein from Xanthomonas campestris pv. campestris (strain B100).